A 270-amino-acid polypeptide reads, in one-letter code: Formamidopyrimidine-DNA glycosylase (270 aa).

The Schiff-base intermediate with DNA role is filled by Pro2. The active-site Proton donor is Glu3. The active-site Proton donor; for beta-elimination activity is the Lys58. DNA is bound by residues His92, Arg111, and Arg153. The FPG-type zinc-finger motif lies at Ser238–Arg270. Arg260 acts as the Proton donor; for delta-elimination activity in catalysis.

Belongs to the FPG family. As to quaternary structure, monomer. Zn(2+) is required as a cofactor.

It carries out the reaction Hydrolysis of DNA containing ring-opened 7-methylguanine residues, releasing 2,6-diamino-4-hydroxy-5-(N-methyl)formamidopyrimidine.. The enzyme catalyses 2'-deoxyribonucleotide-(2'-deoxyribose 5'-phosphate)-2'-deoxyribonucleotide-DNA = a 3'-end 2'-deoxyribonucleotide-(2,3-dehydro-2,3-deoxyribose 5'-phosphate)-DNA + a 5'-end 5'-phospho-2'-deoxyribonucleoside-DNA + H(+). Involved in base excision repair of DNA damaged by oxidation or by mutagenic agents. Acts as a DNA glycosylase that recognizes and removes damaged bases. Has a preference for oxidized purines, such as 7,8-dihydro-8-oxoguanine (8-oxoG). Has AP (apurinic/apyrimidinic) lyase activity and introduces nicks in the DNA strand. Cleaves the DNA backbone by beta-delta elimination to generate a single-strand break at the site of the removed base with both 3'- and 5'-phosphates. The sequence is that of Formamidopyrimidine-DNA glycosylase from Halorhodospira halophila (strain DSM 244 / SL1) (Ectothiorhodospira halophila (strain DSM 244 / SL1)).